The following is a 382-amino-acid chain: GDP-mannose 4,6 dehydratase 2 (382 aa).

NADP(+)-binding positions include 40 to 45 (GITGQD), 97 to 98 (DM), 119 to 123 (LAAQS), and Tyr-134. Residue Thr-166 is part of the active site. Residues Glu-168 and Tyr-190 each act as nucleophile in the active site. The NADP(+) site is built by Lys-194, His-220, and Arg-225.

Belongs to the NAD(P)-dependent epimerase/dehydratase family. GDP-mannose 4,6-dehydratase subfamily. It depends on NADP(+) as a cofactor.

It catalyses the reaction GDP-alpha-D-mannose = GDP-4-dehydro-alpha-D-rhamnose + H2O. It participates in nucleotide-sugar biosynthesis; GDP-L-fucose biosynthesis via de novo pathway; GDP-L-fucose from GDP-alpha-D-mannose: step 1/2. Functionally, catalyzes the conversion of GDP-D-mannose to GDP-4-dehydro-6-deoxy-D-mannose. In Caenorhabditis elegans, this protein is GDP-mannose 4,6 dehydratase 2 (gmd-2).